The chain runs to 461 residues: Fumarate hydratase class II (461 aa).

Substrate-binding positions include 97–99, 127–130, 137–139, and threonine 185; these read SGT, HPND, and SSN. Catalysis depends on histidine 186, which acts as the Proton donor/acceptor. Serine 316 is an active-site residue. Substrate contacts are provided by residues serine 317 and 322-324; that span reads KVN.

Belongs to the class-II fumarase/aspartase family. Fumarase subfamily. In terms of assembly, homotetramer.

It is found in the cytoplasm. It catalyses the reaction (S)-malate = fumarate + H2O. It functions in the pathway carbohydrate metabolism; tricarboxylic acid cycle; (S)-malate from fumarate: step 1/1. Functionally, involved in the TCA cycle. Catalyzes the stereospecific interconversion of fumarate to L-malate. The chain is Fumarate hydratase class II from Staphylococcus saprophyticus subsp. saprophyticus (strain ATCC 15305 / DSM 20229 / NCIMB 8711 / NCTC 7292 / S-41).